The primary structure comprises 338 residues: Protein REG2 (338 aa).

A disordered region spans residues 1–21; the sequence is MTLSNCDSLDNLFQDPPEEEE.

Functionally, regulatory subunit, binds to type-1 protein phosphatase. Functions with HEX2/REG1 and SNF1 protein kinase to regulate growth. Might regulate SNF1 directly or indirectly. The sequence is that of Protein REG2 (REG2) from Saccharomyces cerevisiae (strain ATCC 204508 / S288c) (Baker's yeast).